Reading from the N-terminus, the 332-residue chain is L-lactate dehydrogenase A chain (332 aa).

At Ala2 the chain carries N-acetylalanine. Position 5 is an N6-acetyllysine; alternate (Lys5). Position 5 is an N6-succinyllysine; alternate (Lys5). Lys14 is modified (N6-acetyllysine). The residue at position 18 (Thr18) is a Phosphothreonine. Residue 29 to 57 (GAVGMACAISILMKDLADELALVDVIEDK) coordinates NAD(+). Residue Lys57 is modified to N6-acetyllysine; alternate. Residue Lys57 forms a Glycyl lysine isopeptide (Lys-Gly) (interchain with G-Cter in SUMO2); alternate linkage. Position 81 is an N6-acetyllysine (Lys81). Arg99 contacts NAD(+). Arg106 is a binding site for substrate. An N6-acetyllysine; alternate modification is found at Lys118. Lys118 is subject to N6-succinyllysine; alternate. Residue Lys126 is modified to N6-acetyllysine. Residues Asn138 and Arg169 each coordinate substrate. The active-site Proton acceptor is His193. Residues Lys224 and Lys232 each carry the N6-acetyllysine modification. Position 239 is a phosphotyrosine (Tyr239). Position 243 is an N6-acetyllysine (Lys243). A substrate-binding site is contributed by Thr248. Thr309 is subject to Phosphothreonine. A Phosphoserine modification is found at Ser310. Residue Lys318 is modified to N6-acetyllysine; alternate. Position 318 is an N6-succinyllysine; alternate (Lys318). Thr322 is modified (phosphothreonine).

It belongs to the LDH/MDH superfamily. LDH family. Homotetramer. Interacts with PTEN upstream reading frame protein MP31. ISGylated.

The protein localises to the cytoplasm. It catalyses the reaction (S)-lactate + NAD(+) = pyruvate + NADH + H(+). It functions in the pathway fermentation; pyruvate fermentation to lactate; (S)-lactate from pyruvate: step 1/1. Functionally, interconverts simultaneously and stereospecifically pyruvate and lactate with concomitant interconversion of NADH and NAD(+). This is L-lactate dehydrogenase A chain (LDHA) from Pongo abelii (Sumatran orangutan).